The sequence spans 135 residues: Cytochrome c2 (135 aa).

Residues methionine 1–alanine 23 form the signal peptide. Positions 37, 40, 41, and 114 each coordinate heme c.

The protein belongs to the cytochrome c family. Post-translationally, binds 1 heme c group covalently per subunit.

Cytochrome c2 is found mainly in purple, non-sulfur, photosynthetic bacteria where it functions as the electron donor to the oxidized bacteriochlorophyll in the photophosphorylation pathway. However, it may also have a role in the respiratory chain and is found in some non-photosynthetic bacteria. The protein is Cytochrome c2 (cycA) of Rhodospirillum rubrum (strain ATCC 11170 / ATH 1.1.1 / DSM 467 / LMG 4362 / NCIMB 8255 / S1).